We begin with the raw amino-acid sequence, 185 residues long: Ribosome-recycling factor (185 aa).

The protein belongs to the RRF family.

The protein localises to the cytoplasm. Responsible for the release of ribosomes from messenger RNA at the termination of protein biosynthesis. May increase the efficiency of translation by recycling ribosomes from one round of translation to another. In terms of biological role, plays a role in sporulation. The polypeptide is Ribosome-recycling factor (Bacillus subtilis (strain 168)).